A 453-amino-acid polypeptide reads, in one-letter code: Nuclear distribution protein PAC1 (453 aa).

One can recognise a LisH domain in the interval Q19–G51. Residues T69 to P96 adopt a coiled-coil conformation. WD repeat units lie at residues G120–K161, G162–K201, G205–T244, G247–E286, L314–T355, G356–T395, and I413–T452.

Belongs to the WD repeat LIS1/nudF family. Self-associates. Interacts with NDL1 and dynein.

The protein resides in the cytoplasm. It is found in the cytoskeleton. It localises to the spindle pole. Its function is as follows. Positively regulates the activity of the minus-end directed microtubule motor protein dynein. May enhance dynein-mediated microtubule sliding by targeting dynein to the microtubule plus end. Required for nuclear migration during vegetative growth as well as development. Required for localization of dynein to the mitotic spindle poles. Recruits additional proteins to the dynein complex at SPBs. Required for retrograde early endosome (EE) transport from the hyphal tip. This chain is Nuclear distribution protein PAC1, found in Mycosarcoma maydis (Corn smut fungus).